A 140-amino-acid chain; its full sequence is Histone H3-like protein (140 aa).

The disordered stretch occupies residues 1–36 (MSRTKQTASKALGGKAPRKGISAKSIPSSGCSPAMP). Lys5 carries the post-translational modification N6,N6,N6-trimethyllysine; alternate. Lys5 bears the N6,N6-dimethyllysine; alternate mark. N6-methyllysine; alternate is present on residues Lys5 and Lys10. An N6-acetyllysine; alternate mark is found at Lys10, Lys15, Lys19, and Lys24. Lys15 carries the N6,N6-dimethyllysine; alternate modification. An N6-methyllysine; alternate mark is found at Lys19 and Lys24. An N6-acetyllysine mark is found at Lys56 and Lys64.

The protein belongs to the histone H3 family. The nucleosome is a histone octamer containing two molecules each of H2A, H2B, H3 and H4 assembled in one H3-H4 heterotetramer and two H2A-H2B heterodimers. The octamer wraps approximately 147 bp of DNA. Mono-, di- and trimethylated to form H3K4me1/2/3. H3K4me activates gene expression by regulating transcription elongation and plays a role in telomere length maintenance. H3K4me enrichment correlates with transcription levels, and occurs in a 5' to 3' gradient with H3K4me3 enrichment at the 5'-end of genes, shifting to H3K4me2 and then H3K4me1. Post-translationally, acetylation of histone H3 leads to transcriptional activation.

It localises to the nucleus. It is found in the chromosome. Core component of nucleosome. Nucleosomes wrap and compact DNA into chromatin, limiting DNA accessibility to the cellular machineries which require DNA as a template. Histones thereby play a central role in transcription regulation, DNA repair, DNA replication and chromosomal stability. DNA accessibility is regulated via a complex set of post-translational modifications of histones, also called histone code, and nucleosome remodeling. This chain is Histone H3-like protein, found in Encephalitozoon cuniculi (strain GB-M1) (Microsporidian parasite).